Reading from the N-terminus, the 375-residue chain is 23S rRNA (uracil(747)-C(5))-methyltransferase RlmC (375 aa).

4 residues coordinate [4Fe-4S] cluster: Cys3, Cys11, Cys14, and Cys87. The S-adenosyl-L-methionine site is built by Gln212, Phe241, Glu262, and Asn307. Catalysis depends on Cys334, which acts as the Nucleophile.

It belongs to the class I-like SAM-binding methyltransferase superfamily. RNA M5U methyltransferase family. RlmC subfamily.

It carries out the reaction uridine(747) in 23S rRNA + S-adenosyl-L-methionine = 5-methyluridine(747) in 23S rRNA + S-adenosyl-L-homocysteine + H(+). Functionally, catalyzes the formation of 5-methyl-uridine at position 747 (m5U747) in 23S rRNA. The polypeptide is 23S rRNA (uracil(747)-C(5))-methyltransferase RlmC (Xenorhabdus nematophila (strain ATCC 19061 / DSM 3370 / CCUG 14189 / LMG 1036 / NCIMB 9965 / AN6)).